Consider the following 111-residue polypeptide: Universal stress protein B (111 aa).

2 consecutive transmembrane segments (helical) span residues 1–21 and 90–110; these read MIST…NMAR and FILT…LMIW.

The protein belongs to the universal stress protein B family.

It is found in the cell inner membrane. This is Universal stress protein B from Cronobacter sakazakii (strain ATCC BAA-894) (Enterobacter sakazakii).